Reading from the N-terminus, the 155-residue chain is 3-hydroxyacyl-[acyl-carrier-protein] dehydratase FabZ (155 aa).

His-61 is a catalytic residue.

This sequence belongs to the thioester dehydratase family. FabZ subfamily.

The protein resides in the cytoplasm. The catalysed reaction is a (3R)-hydroxyacyl-[ACP] = a (2E)-enoyl-[ACP] + H2O. Its function is as follows. Involved in unsaturated fatty acids biosynthesis. Catalyzes the dehydration of short chain beta-hydroxyacyl-ACPs and long chain saturated and unsaturated beta-hydroxyacyl-ACPs. The protein is 3-hydroxyacyl-[acyl-carrier-protein] dehydratase FabZ of Synechococcus elongatus (strain ATCC 33912 / PCC 7942 / FACHB-805) (Anacystis nidulans R2).